Here is a 57-residue protein sequence, read N- to C-terminus: Large ribosomal subunit protein bL32 (57 aa).

A disordered region spans residues 1-23 (MAVPKKRTSKTRTNRRRAQKKAR).

Belongs to the bacterial ribosomal protein bL32 family.

The chain is Large ribosomal subunit protein bL32 from Natranaerobius thermophilus (strain ATCC BAA-1301 / DSM 18059 / JW/NM-WN-LF).